A 119-amino-acid polypeptide reads, in one-letter code: Large ribosomal subunit protein bL20 (119 aa).

It belongs to the bacterial ribosomal protein bL20 family.

In terms of biological role, binds directly to 23S ribosomal RNA and is necessary for the in vitro assembly process of the 50S ribosomal subunit. It is not involved in the protein synthesizing functions of that subunit. This is Large ribosomal subunit protein bL20 from Delftia acidovorans (strain DSM 14801 / SPH-1).